The primary structure comprises 86 residues: Small ribosomal subunit protein uS15 (86 aa).

The disordered stretch occupies residues 1–22 (MSIDTQKVIEDNKRSSADTGSP). A compositionally biased stretch (basic and acidic residues) spans 7–16 (KVIEDNKRSS).

It belongs to the universal ribosomal protein uS15 family. In terms of assembly, part of the 30S ribosomal subunit. Forms a bridge to the 50S subunit in the 70S ribosome, contacting the 23S rRNA.

Functionally, one of the primary rRNA binding proteins, it binds directly to 16S rRNA where it helps nucleate assembly of the platform of the 30S subunit by binding and bridging several RNA helices of the 16S rRNA. Forms an intersubunit bridge (bridge B4) with the 23S rRNA of the 50S subunit in the ribosome. The protein is Small ribosomal subunit protein uS15 of Stenotrophomonas maltophilia (strain R551-3).